Reading from the N-terminus, the 786-residue chain is Endonuclease MutS2 (786 aa).

335–342 is an ATP binding site; the sequence is GPNTGGKT. The disordered stretch occupies residues 529–549; sequence SQKNAERERKEAEEHRKQSEK. One can recognise a Smr domain in the interval 711-786; the sequence is LDLRGERYED…GLGVTVVELK (76 aa).

Belongs to the DNA mismatch repair MutS family. MutS2 subfamily. Homodimer. Binds to stalled ribosomes, contacting rRNA.

In terms of biological role, endonuclease that is involved in the suppression of homologous recombination and thus may have a key role in the control of bacterial genetic diversity. Acts as a ribosome collision sensor, splitting the ribosome into its 2 subunits. Detects stalled/collided 70S ribosomes which it binds and splits by an ATP-hydrolysis driven conformational change. Acts upstream of the ribosome quality control system (RQC), a ribosome-associated complex that mediates the extraction of incompletely synthesized nascent chains from stalled ribosomes and their subsequent degradation. Probably generates substrates for RQC. The chain is Endonuclease MutS2 from Bacillus mycoides (strain KBAB4) (Bacillus weihenstephanensis).